We begin with the raw amino-acid sequence, 474 residues long: Ubiquinol-cytochrome-c reductase complex core protein 2, mitochondrial (474 aa).

Residues 1–42 (MKSVVRSKGTQALFRRFSSALGDSINPNQVGVGDNVIRVNGR) constitute a mitochondrion transit peptide.

It belongs to the peptidase M16 family. UQCRC2/QCR2 subfamily. As to quaternary structure, component of the ubiquinol-cytochrome c oxidoreductase (cytochrome b-c1 complex, complex III, CIII), a multisubunit enzyme composed of 3 respiratory subunits cytochrome b, cytochrome c1 and Rieske protein, 2 core protein subunits, and additional low-molecular weight protein subunits. The complex exists as an obligatory dimer and forms supercomplexes (SCs) in the inner mitochondrial membrane with cytochrome c oxidase (complex IV, CIV).

Its subcellular location is the mitochondrion inner membrane. Component of the ubiquinol-cytochrome c oxidoreductase, a multisubunit transmembrane complex that is part of the mitochondrial electron transport chain which drives oxidative phosphorylation. The respiratory chain contains 3 multisubunit complexes succinate dehydrogenase (complex II, CII), ubiquinol-cytochrome c oxidoreductase (cytochrome b-c1 complex, complex III, CIII) and cytochrome c oxidase (complex IV, CIV), that cooperate to transfer electrons derived from NADH and succinate to molecular oxygen, creating an electrochemical gradient over the inner membrane that drives transmembrane transport and the ATP synthase. The cytochrome b-c1 complex catalyzes electron transfer from ubiquinol to cytochrome c, linking this redox reaction to translocation of protons across the mitochondrial inner membrane, with protons being carried across the membrane as hydrogens on the quinol. In the process called Q cycle, 2 protons are consumed from the matrix, 4 protons are released into the intermembrane space and 2 electrons are passed to cytochrome c. This chain is Ubiquinol-cytochrome-c reductase complex core protein 2, mitochondrial, found in Euglena gracilis.